Consider the following 287-residue polypeptide: Protease HtpX (287 aa).

A run of 2 helical transmembrane segments spans residues 4 to 24 and 33 to 53; these read IFLL…VMSI and GGLL…SLAI. Residue His-139 participates in Zn(2+) binding. The active site involves Glu-140. A Zn(2+)-binding site is contributed by His-143. 2 consecutive transmembrane segments (helical) span residues 154–174 and 195–215; these read LIQG…ASII and AVVF…VAYF. A Zn(2+)-binding site is contributed by Glu-220.

The protein belongs to the peptidase M48B family. Zn(2+) serves as cofactor.

Its subcellular location is the cell inner membrane. This Shewanella loihica (strain ATCC BAA-1088 / PV-4) protein is Protease HtpX.